The following is a 149-amino-acid chain: Decarboxylase AgnL1 (149 aa).

The EthD domain maps to 30-125 (PGMSEEDYRH…VGDHEKFADT (96 aa)).

This sequence belongs to the tpcK family.

It catalyses the reaction atrochrysone carboxylate + H(+) = atrochrysone + CO2. It participates in secondary metabolite biosynthesis. Functionally, decarboxylase; part of the gene cluster that mediates the biosynthesis of agnestins, dihydroxy-xanthone metabolites. The pathway begins with the assembly and cyclization of atrochrysone thioester by the non-reducing polyketide synthase Agnpks1. The atrochrysone carboxyl ACP thioesterase AgnL7 then breaks the thioester bond and releases the atrochrysone carboxylic acid as the first enzyme-free intermediate. The decarboxylase AgnL1 then catalyzes the concerted decarboxylation-elimination required to convert atochrysone carboxylic acid into emodin anthrone, which is further oxidized to emodin by the anthrone oxygenase AgnL2. Emodin then undergoes reduction catalyzed by the oxidoreductase AgnL4 to yield the dihydroquinone tautomer which is the substrate for reduction by the short chain dehydrogenase AgnL6 reduction to produce hydroxyketone, followed by AgnL8 dehydration and likely spontaneous autoxidation to chrysophanol. Baeyer-Villiger oxidation by the oxidase AgnL3 leads to monodictyphenone via cleavage of the C-10/C-10a bond of chrysophanol. Alternative cleavage at the C-4a/C-10 bond of chrysophanol also leads to the formation some cephalone F. Further conversion to agnestins A and B, requires reduction to dihydro-monodictyphenone, oxidation to agnestin C probably via an epoxide, and rearrangement to either agnestin A or agnestin B directly, although agnestin A or agnestin B can also interconvert. Within the cluster, AgnR1 is the only unassigned oxidoreductase present which could be involved in this conversion. However, AgnR1 seems not to be involved in this step, and thus genes involved in the proposed oxidation/reduction may be located elsewhere on the genome. Further agnestin A derivatives are probably formed by spontaneous decarboxylations, dehydrations and methanolysis reactions. This Paecilomyces divaricatus (Penicillium divaricatum) protein is Decarboxylase AgnL1.